The chain runs to 154 residues: UPF0225 protein YpsIP31758_1970 (154 aa).

It belongs to the UPF0225 family.

This is UPF0225 protein YpsIP31758_1970 from Yersinia pseudotuberculosis serotype O:1b (strain IP 31758).